The sequence spans 649 residues: Protein teflon (649 aa).

The C2H2-type 1 zinc-finger motif lies at 33–56; the sequence is LYCHFCRDLFTQLPEFLRHLQSNH. The interval 78–126 is disordered; sequence EQGKAHEDAQSAGHNSSSGDSSSLMNSEDSRAIEGSEDNSDNSPMKPEQ. The span at 88–104 shows a compositional bias: low complexity; the sequence is SAGHNSSSGDSSSLMNS. C2H2-type zinc fingers lie at residues 599–621 and 625–648; these read YFCK…LISH and FQCT…RNAH.

This sequence belongs to the Teflon family. Expressed at a low level in a variety of tissues, highest expression is in testis.

It localises to the nucleus. Its subcellular location is the chromosome. In terms of biological role, specifically required in males for proper segregation of autosomal bivalents at meiosis I. Expression is required in the male germ line prior to spermatocyte stage S4. May have a role as a bridging molecule maintaining adhesion to hold autosome bivalents together via heterochromatic connections. The protein is Protein teflon of Drosophila melanogaster (Fruit fly).